Here is a 106-residue protein sequence, read N- to C-terminus: NADH-quinone oxidoreductase subunit K (106 aa).

Helical transmembrane passes span 8–28 (IGIE…VFGV), 35–55 (IIVF…FVAF), and 66–86 (VFVF…LAIL).

The protein belongs to the complex I subunit 4L family. In terms of assembly, NDH-1 is composed of 14 different subunits. Subunits NuoA, H, J, K, L, M, N constitute the membrane sector of the complex.

It localises to the cell inner membrane. It carries out the reaction a quinone + NADH + 5 H(+)(in) = a quinol + NAD(+) + 4 H(+)(out). In terms of biological role, NDH-1 shuttles electrons from NADH, via FMN and iron-sulfur (Fe-S) centers, to quinones in the respiratory chain. The immediate electron acceptor for the enzyme in this species is believed to be a menaquinone. Couples the redox reaction to proton translocation (for every two electrons transferred, four hydrogen ions are translocated across the cytoplasmic membrane), and thus conserves the redox energy in a proton gradient. This Flavobacterium johnsoniae (strain ATCC 17061 / DSM 2064 / JCM 8514 / BCRC 14874 / CCUG 350202 / NBRC 14942 / NCIMB 11054 / UW101) (Cytophaga johnsonae) protein is NADH-quinone oxidoreductase subunit K.